Here is an 843-residue protein sequence, read N- to C-terminus: Translation initiation factor IF-2 (843 aa).

The tract at residues 94–259 (QRSPEEIEAE…AHGFQSPTGP (166 aa)) is disordered. Positions 96–135 (SPEEIEAERKREMDERRAVENAARQKAEEEAKRRAEEDAR) are enriched in basic and acidic residues. Residues 136–177 (NQPAAGQPASAPAQPVAAAEPVREAPAPAAAAPAPASAAPSA) show a composition bias toward low complexity. Basic and acidic residues-rich tracts occupy residues 178-219 (DARK…EKAP) and 227-236 (TTDEESDSFR). The span at 237-250 (RGGRGKSRLKKRNA) shows a compositional bias: basic residues. The 170-residue stretch at 343–512 (SRAPVVTVMG…LLQAEVLELK (170 aa)) folds into the tr-type G domain. The interval 352 to 359 (GHVDHGKT) is G1. A GTP-binding site is contributed by 352 to 359 (GHVDHGKT). A G2 region spans residues 377–381 (GITQH). The segment at 398 to 401 (DTPG) is G3. GTP-binding positions include 398–402 (DTPGH) and 452–455 (NKID). The segment at 452–455 (NKID) is G4. The interval 488–490 (SAK) is G5.

The protein belongs to the TRAFAC class translation factor GTPase superfamily. Classic translation factor GTPase family. IF-2 subfamily.

The protein resides in the cytoplasm. In terms of biological role, one of the essential components for the initiation of protein synthesis. Protects formylmethionyl-tRNA from spontaneous hydrolysis and promotes its binding to the 30S ribosomal subunits. Also involved in the hydrolysis of GTP during the formation of the 70S ribosomal complex. In Pseudomonas savastanoi pv. phaseolicola (strain 1448A / Race 6) (Pseudomonas syringae pv. phaseolicola (strain 1448A / Race 6)), this protein is Translation initiation factor IF-2.